The sequence spans 540 residues: Zinc metalloproteinase nas-10 (540 aa).

In terms of domain architecture, Peptidase M12A spans 293 to 500 (ASIFFEQNLI…VEILNKMYCK (208 aa)). Disulfide bonds link C339/C499, C365/C385, C504/C540, C511/C533, and C520/C537. H394 is a Zn(2+) binding site. E395 is an active-site residue. Residues H398 and H404 each contribute to the Zn(2+) site. One can recognise a ShKT domain in the interval 504-540 (CDDKNVYCGAWALQDLCNNPNHNVWMRSNCRKSCNFC).

It depends on Zn(2+) as a cofactor.

Metalloprotease. The chain is Zinc metalloproteinase nas-10 from Caenorhabditis elegans.